Reading from the N-terminus, the 235-residue chain is MQQRGAAGSRGCALFPLLGVLFFQGVYIVFSLEIRADAHVRGYVGEKIKLKCTFKSTSDVTDKLTIDWTYRPPSSSHTVSIFHYQSFQYPTTAGTFRDRISWVGNVYKGDASISISNPTIKDNGTFSCAVKNPPDVHHNIPMTELTVTERGFGTMLSSVALLSILVFVPSAVVVALLLVRMGRKAAGLKKRSRSGYKKSSIEVSDDTDQEEEEACMARLCVRCAECLDSDYEETY.

The signal sequence occupies residues 1–31; sequence MQQRGAAGSRGCALFPLLGVLFFQGVYIVFS. Residues 32–148 enclose the Ig-like V-type domain; it reads LEIRADAHVR…NIPMTELTVT (117 aa). Residues 32-158 lie on the Extracellular side of the membrane; the sequence is LEIRADAHVR…ERGFGTMLSS (127 aa). A disulfide bridge connects residues C52 and C128. The N-linked (GlcNAc...) asparagine glycan is linked to N123. Residues 159–179 form a helical membrane-spanning segment; sequence VALLSILVFVPSAVVVALLLV. The Cytoplasmic segment spans residues 180-235; sequence RMGRKAAGLKKRSRSGYKKSSIEVSDDTDQEEEEACMARLCVRCAECLDSDYEETY.

It belongs to the myelin P0 protein family.

The protein resides in the membrane. Functionally, mediates homophilic cell-cell adhesion. The protein is Myelin protein zero-like protein 3 (MPZL3) of Homo sapiens (Human).